Reading from the N-terminus, the 366-residue chain is 3-dehydroquinate synthase (366 aa).

NAD(+) contacts are provided by residues 73–78 (DGERAK), 107–111 (GVVGD), 131–132 (TT), lysine 144, and lysine 153. Glutamate 186, histidine 249, and histidine 266 together coordinate Zn(2+).

It belongs to the sugar phosphate cyclases superfamily. Dehydroquinate synthase family. The cofactor is Co(2+). Zn(2+) serves as cofactor. Requires NAD(+) as cofactor.

The protein resides in the cytoplasm. The catalysed reaction is 7-phospho-2-dehydro-3-deoxy-D-arabino-heptonate = 3-dehydroquinate + phosphate. It functions in the pathway metabolic intermediate biosynthesis; chorismate biosynthesis; chorismate from D-erythrose 4-phosphate and phosphoenolpyruvate: step 2/7. Functionally, catalyzes the conversion of 3-deoxy-D-arabino-heptulosonate 7-phosphate (DAHP) to dehydroquinate (DHQ). The polypeptide is 3-dehydroquinate synthase (Koribacter versatilis (strain Ellin345)).